A 378-amino-acid polypeptide reads, in one-letter code: Queuine tRNA-ribosyltransferase (378 aa).

Asp-91 acts as the Proton acceptor in catalysis. Residues 91–95 (DSGGF), Asp-145, Gln-189, and Gly-216 each bind substrate. The RNA binding stretch occupies residues 247 to 253 (GVGKPED). Asp-266 functions as the Nucleophile in the catalytic mechanism. The tract at residues 271 to 275 (TRNAR) is RNA binding; important for wobble base 34 recognition. Cys-304, Cys-306, Cys-309, and His-335 together coordinate Zn(2+).

It belongs to the queuine tRNA-ribosyltransferase family. In terms of assembly, homodimer. Within each dimer, one monomer is responsible for RNA recognition and catalysis, while the other monomer binds to the replacement base PreQ1. Zn(2+) serves as cofactor.

The catalysed reaction is 7-aminomethyl-7-carbaguanine + guanosine(34) in tRNA = 7-aminomethyl-7-carbaguanosine(34) in tRNA + guanine. The protein operates within tRNA modification; tRNA-queuosine biosynthesis. Its function is as follows. Catalyzes the base-exchange of a guanine (G) residue with the queuine precursor 7-aminomethyl-7-deazaguanine (PreQ1) at position 34 (anticodon wobble position) in tRNAs with GU(N) anticodons (tRNA-Asp, -Asn, -His and -Tyr). Catalysis occurs through a double-displacement mechanism. The nucleophile active site attacks the C1' of nucleotide 34 to detach the guanine base from the RNA, forming a covalent enzyme-RNA intermediate. The proton acceptor active site deprotonates the incoming PreQ1, allowing a nucleophilic attack on the C1' of the ribose to form the product. After dissociation, two additional enzymatic reactions on the tRNA convert PreQ1 to queuine (Q), resulting in the hypermodified nucleoside queuosine (7-(((4,5-cis-dihydroxy-2-cyclopenten-1-yl)amino)methyl)-7-deazaguanosine). In Vibrio vulnificus (strain CMCP6), this protein is Queuine tRNA-ribosyltransferase.